The sequence spans 501 residues: Prostacyclin synthase (501 aa).

Residues 1–21 (MSWAALLGLLAVLLLLLLLLS) traverse the membrane as a helical segment. Residues R107, L113, N288, 359 to 360 (TR), and R383 each bind substrate. C442 is a heme binding site.

It belongs to the cytochrome P450 family. Requires heme as cofactor.

It is found in the endoplasmic reticulum membrane. It catalyses the reaction prostaglandin H2 = prostaglandin I2. It carries out the reaction a hydroperoxyeicosatetraenoate = an oxoeicosatetraenoate + H2O. The catalysed reaction is (15S)-hydroperoxy-(5Z,8Z,11Z,13E)-eicosatetraenoate = 15-oxo-(5Z,8Z,11Z,13E)-eicosatetraenoate + H2O. The enzyme catalyses (15S)-hydroperoxy-(5Z,8Z,11Z,13E)-eicosatetraenoate + AH2 = (15S)-hydroxy-(5Z,8Z,11Z,13E)-eicosatetraenoate + A + H2O. Functionally, catalyzes the biosynthesis and metabolism of eicosanoids. Catalyzes the isomerization of prostaglandin H2 to prostacyclin (= prostaglandin I2), a potent mediator of vasodilation and inhibitor of platelet aggregation. Additionally, displays dehydratase activity, toward hydroperoxyeicosatetraenoates (HPETEs), especially toward (15S)-hydroperoxy-(5Z,8Z,11Z,13E)-eicosatetraenoate (15(S)-HPETE). The chain is Prostacyclin synthase (Ptgis) from Rattus norvegicus (Rat).